The sequence spans 307 residues: Tyrosine recombinase XerC (307 aa).

A Core-binding (CB) domain is found at 9–95 (ETLSLAIDSF…ALRSFLDWQV (87 aa)). Residues 116–296 (HLPKNMDVDE…DFQHLAKVYD (181 aa)) form the Tyr recombinase domain. Residues Arg155, Lys179, His248, Arg251, and His274 contribute to the active site. Tyr283 functions as the O-(3'-phospho-DNA)-tyrosine intermediate in the catalytic mechanism.

This sequence belongs to the 'phage' integrase family. XerC subfamily. Forms a cyclic heterotetrameric complex composed of two molecules of XerC and two molecules of XerD, in which XerC interacts with XerD via its C-terminal region, XerD interacts with XerC via its C-terminal region and so on.

It localises to the cytoplasm. Its activity is regulated as follows. FtsK may regulate the catalytic switch between XerC and XerD in the heterotetrameric complex during the two steps of the recombination process. Its function is as follows. Site-specific tyrosine recombinase, which acts by catalyzing the cutting and rejoining of the recombining DNA molecules. Binds cooperatively to specific DNA consensus sequences that are separated from XerD binding sites by a short central region, forming the heterotetrameric XerC-XerD complex that recombines DNA substrates. The complex is essential to convert dimers of the bacterial chromosome into monomers to permit their segregation at cell division. It also contributes to the segregational stability of plasmids. In the complex XerC specifically exchanges the top DNA strands. This is Tyrosine recombinase XerC from Proteus mirabilis.